Here is a 945-residue protein sequence, read N- to C-terminus: Isoleucine--tRNA ligase (945 aa).

The 'HIGH' region signature appears at 66–76 (PYANGDIHLGH). Residue Glu581 participates in L-isoleucyl-5'-AMP binding. Residues 622-626 (KMSKS) carry the 'KMSKS' region motif. Lys625 contacts ATP. 4 residues coordinate Zn(2+): Cys908, Cys911, Cys928, and Cys931.

It belongs to the class-I aminoacyl-tRNA synthetase family. IleS type 1 subfamily. In terms of assembly, monomer. It depends on Zn(2+) as a cofactor.

It is found in the cytoplasm. It catalyses the reaction tRNA(Ile) + L-isoleucine + ATP = L-isoleucyl-tRNA(Ile) + AMP + diphosphate. Its function is as follows. Catalyzes the attachment of isoleucine to tRNA(Ile). As IleRS can inadvertently accommodate and process structurally similar amino acids such as valine, to avoid such errors it has two additional distinct tRNA(Ile)-dependent editing activities. One activity is designated as 'pretransfer' editing and involves the hydrolysis of activated Val-AMP. The other activity is designated 'posttransfer' editing and involves deacylation of mischarged Val-tRNA(Ile). The chain is Isoleucine--tRNA ligase from Burkholderia orbicola (strain MC0-3).